The following is a 9439-amino-acid chain: MSGTLHNTVGSGILPYQQEIRIKLTSNEPIKDSEWSITGYPNTLTLQNAVGRTNNATEKNLALVGHIDPGNYFITVKFGDKVEQFEIRSKPTPPRIITTANELRGNPNHKPEIRVTDIPNDTTAKIKLVMGGTDGDHDPEINPYTVPENYTVVAEAYHDNDPSKNGVLTFRSSDYLKDLPLSGELKAIVYYNQYVQSNFSKSVPFSSDTTPPTINEPAGLVHKYYRGDHVEITLPVTDNTGGSGLRDVNVNLPQGWTKTFTINPNNNTEGTLKLIGNIPSNEAYNTTYHFNITATDNSGNTTNPAKTFILNVGKLADDLNPVGLSRDQLQLVTDPSSLSNSEREEVKRKISEANANIRSYLLQNNPILAGVNGDVTFYYRDGSVDVIDAENVITYEPERKSIFSENGNTNKKEAVITIARGQNYTIGPNLRKYFSLSNGSDLPNRDFTSISAIGSLPSSSEISRLNVGNYNYRVNAKNAYHKTQQELNLKLKIVEVNAPTGNNRVYRVSTYNLTNDEINKIKQAFKAANSGLNLNDNDITVSNNFDHRNVSSVTVTIRKGDLIKEFSSNLNNMNFLRWVNIRDDYTISWTSSKIQGRNTDGGLEWSPDHKSLIYKYDATLGRQINTNDVLTLLQATAKNSNLRSNINSNEKQLAERGSNGYSKSIIRDDGEKSYLLNSNPIQVLDLVEPDNGYGGRQVSHSNVIYNEKNSSIVNGQVPEANGASAFNIDKVVKANAANNGIMGVIYKAQLYLAPYSPKGYIEKLGQNLSNTNNVINVYFVPSDKVNPSITVGNYDHHTVYSGETFKNTINVNDNYGLNTVASTSDSAITMTRNNNELVGQAPNVTNSINKIVKVKATDKSGNESIVSFTVNIKPLNEKYRITTSSSNQTPVRISNIQNNANLSIEDQNRVKSSLSMTKILGTRNYVNESNNDVRSQVVSKVNRSGNNATVNVTTTFSDGTTNTITVPVKHVLLEVVPTTRTTVRGQQFPTGKGTSPNDFFSLRTGGPVDARIVWVNNQGPDINSNQIGRDLTLHAEIFFDGETTPIRKDTTYKLSQSIPKQIYETTINGRFNSSGDAYPGNFVQAVNQYWPEHMDFRWAQGSGTPSSRNAGSFTKTVTVVYQNGQTENVNVLFKVKPNKPVIDSNSVISKGQLNGQQILVRNVPQNAQVTLYQSNGTVIPNTNTTIDSNGIATVTIQGTLPTGNITAKTSMTNNVTYTKQNSSGIASNTTEDISVFSENSDQVNVTAGMQAKNDGIKIIKGTNYNFNDFNSFISNIPAHSTLTWNEEPNSWKNNIGTTTKTVTVTLPNHQGTRTVDIPITIYPTVTAKNPVRDQKGRNLTNGTDVYNYIIFENNNRLGGTASWKDNRQPDKNIAGVQNLIALVNYPGISTPLEVPVKVWVYNFDFTQPIYKIQVGDTFPKGTWAGYYKHLENGEGLPIDGWKFYWNQQSTGTTSDQWQSLAYTRTPFVKTGTYDVVNPSNWGVWQTSQSAKFIVTNAKPNQPTITQSKTGDVTVTPGAVRNILISGTNDYIQASADKIVINKNGNKLTTFVKNNDGRWTVETGSPDINGIGPTNNGTAISLSRLAVRPGDSIEAIATEGSGETISTSATSEIYIVKAPQPEQVATHTYDNGTFDILPDNSRNSLNPTERVEINYTEKLNGNETQKSFTITKNNNGKWTINNKPNYVEFNQDNGKVVFSANTIKPNSQITITPKAGQGNTENTNPTVIQAPAQHTLTINEIVKEQGQNVTNDDINNAVQVPNKNRVAIKQGNALPTNLAGGSTSHIPVVIYYSDGSSEEATETVRTKVNKTELINARRRLDEEISKENKTPSSIRNFDQAMNRAQSQINTAKSDADQVIGTEFATPQQVNSALSKVQAAQNKINEAKALLQNKADNSQLVRAKEQLQQSIQPAASTDGMTQDSTRNYNNKRQAAEQAIQHANSVINNGDATSQQINDAKNTVEQAQRDYVEAKSNLRADKSQLQSAYDTLNRDVLTNDKKPASVRRYNEAISNIRKELDTAKADASSTLRNTNPSVEQVRDALNKINTVQPKVNQAIALLQPKENNSELVQAKKRLQDAVNDIPQTQGMTQQTINNYNDKQREAERALTSAQRVIDNGDATTQEITSEKSKVEQAMQALTNAKSNLRADKNELQTAYNKLIENVSTNGKKPASIRQYETAKARIQNQINDAKNEAERILGNDNPQVSQVTQALNKIKAIQPKLTEAINMLQNKENNTELVNAKNRLENAVNDTDPTHGMTQETINNYNAKKREAQNEIQKANMIINNGDATAQDISSEKSKVEQVLQALQNAKNDLRADKRELQTAYNKLIQNVNTNGKKPSSIQNYKSARRNIENQYNTAKNEAHNVLENTNPTVNAVEDALRKINAIQPEVTKAINILQDKEDNSELVRAKEKLDQAINSQPSLNGMTQESINNYTTKRREAQNIASSADTIINNGDASIEQITENKIRVEEATNALNEAKQHLTADTTSLKTEVRKLSRRGDTNNKKPSSVSAYNNTIHSLQSEITQTENRANTIINKPIRSVEEVNNALHEVNQLNQRLTDTINLLQPLANKESLKEARNRLESKINETVQTDGMTQQSVENYKQAKIKAQNESSIAQTLINNGDASDQEVSTEIEKLNQKLSELTNSINHLTVNKEPLETAKNQLQANIDQKPSTDGMTQQSVQSYERKLQEAKDKINSINNVLANNPDVNAIRTNKVETEQINNELTQAKQGLTVDKQPLINAKTALQQSLDNQPSTTGMTEATIQNYNAKRQKAEQVIQNANKIIENAQPSVQQVSDEKSKVEQALSELNNAKSALRADKQELQQAYNQLIQPTDLNNKKPASITAYNQRYQQFSNELNSTKTNTDRILKEQNPSVADVNNALNKVREVQQKLNEARALLQNKEDNSALVRAKEQLQQAVDQVPSTEGMTQQTKDDYNSKQQAAQQEISKAQQVIDNGDATTQQISNAKTNVERALEALNNAKTGLRADKEELQNAYNQLTQNIDTSGKTPASIRKYNEAKSRIQTQIDSAKNEANSILTNDNPQVSQVTAALNKIKAVQPELDKAIAMLKNKENNNALVQAKQQLQQIVNEVDPTQGMTTDTANNYKSKKREAEDEIQKAQQIINNGDATEQQITNETNRVNQAINAINKAKNDLRADKSQLENAYNQLIQNVDTNGKKPASIQQYQAARQAIETQYNNAKSEAHQILENSNPSVNEVAQALQKVEAVQLKVNDAIHILQNKENNSALVTAKNQLQQSVNDQPLTTGMTQDSINNYEAKRNEAQSAIRNAEAVINNGDATAKQISDEKSKVEQALAHLNDAKQQLTADTTELQTAVQQLNRRGDTNNKKPRSINAYNKAIQSLETQITSAKDNANAVIQKPIRTVQEVNNALQQVNQLNQQLTEAINQLQPLSNNDALKAARLNLENKINQTVQTDGMTQQSIEAYQNAKRVAQNESNTALALINNGDADEQQITTETDRVNQQTTNLTQAINGLTVNKEPLETAKTALQNNIDQVPSTDGMTQQSVANYNQKLQIAKNEINTINNVLANNPDVNAIKTNKAEAERISNDLTQAKNNLQVDTQPLEKIKRQLQDEIDQGTNTDGMTQDSVDNYNDSLSAAIIEKGKVNKLLKRNPTVEQVKESVANAQQVIQDLQNARTSLVPDKTQLQEAKNRLENSINQQTDTDGMTQDSLNNYNDKLAKARQNLEKISKVLGGQPTVAEIRQNTDEANAHKQALDTARSQLTLNREPYINHINNESHLNNAQKDNFKAQVNSAPNHNTLETIKNKADTLNQSMTALSESIADYENQKQQENYLDASNNKRQDYDNAVNAAKGILNQTQSPTMSADVIDQKAEDVKRTKTALDGNQRLEVAKQQALNHLNTLNDLNDAQRQTLTDTINHSPNINSVNQAKEKANTVNTAMTQLKQTIANYDDELHDGNYINADKDKKDAYNNAVNNAKQLINQSDANQAQLDPAEINKVTQRVNTTKNDLNGNDKLAEAKRDANTTIDGLTYLNEAQRNKAKENVGKASTKTNITSQLQDYNQLNIAMQALRNSVNDVNNVKANSNYINEDNGPKEAYNQAVTHAQTLINAQSNPEMSRDVVNQKTQAVNTAHQNLHGQQKLEQAQSSANTEIGNLPNLTNTQKAKEKELVNSKQTRTEVQEQLNQAKSLDSSMGTLKSLVAKQPTVQKTSVYINEDQPEQSAYNDSITMGQTIINKTADPVLDKTLVDNAISNISTKENALHGEQKLTTAKTEAINALNTLADLNTPQKEAIKTAINTAHTRTDVTAEQSKANQINSAMHTLRQNISDNESVTNESNYINAEPEKQHAFTEALNNAKEIVNEQQATLDANSINQKAQAILTTKNALDGEEQLRRAKENADQEINTLNQLTDAQRNSEKGLVNSSQTRTEVASQLAKAKELNKVMEQLNHLINGKNQMINSSKFINEDANQQQAYSNAIASAEALKNKSQNPELDKVTIEQAINNINSAINNLNGEAKLTKAKEDAVASINNLSGLTNEQKTKENQAVNGAQTRDQVANKLRDAEALDQSMQTLRDLVNNQNAIHSTSNYFNEDSTQKNTYDNAIDNGSTYITGQHNPELNKSTIDQTISRINTAKNDLHGVEKLQRDKGTANQEIGQLGYLNDPQKSGEESLVNGSNTRSEVEEHLNEAKSLNNAMKQLRDKVAEKTNVKQSSDYINDSTEHQRGYDQALQEAENIINEIGNPTLNKSEIEQKLQQLTDAQNALQGSHLLEEAKNNAITGINKLTALNDAQRQKAIENVQAQQTIPAVNQQLTLDREINTAMQALRDKVGQQNNVHQQSNYFNEDEQPKHNYDNSVQAGQTIIDKLQDPIMNKNEIEQAINQINTTQTALSGENKLHTDQESTNRQIEGLSSLNTAQINAEKDLVNQAKTRTDVAQKLAAAKEINSAMSNLRDGIQNKEDIKRSSAYINADPTKVTAYDQALQNAENIINATPNVELNKATIEQALSRVQQAQQDLDGVQQLANAKQQATQTVNGLNSLNDGQKRELNLLINSANTRTKVQEELNKATELNHAMEALRNSVQNVDQVKQSSNYVNEDQPEQHNYDNAVNEAQATINNNAQPVLDKLAIERLTQTVNTTKDALHGAQKLTQDQQAAETGIRGLTSLNEPQKNAEVAKVTAATTRDEVRNIRQEATTLDTAMLGLRKSIKDKNDTKNSSKYINEDHDQQQAYDNAVNNAQQVIDETQATLSSDTINQLANAVTQAKSNLHGDTKLQHDKDSAKQTIAQLQNLNSAQKHMEDSLIDNESTRTQVQHDLTEAQALDGLMGALKESIKDYTNIVSNGNYINAEPSKKQAYDAAVQNAQNIINGTNQPTINKGNVTTATQTVKNTKDALDGDHRLEEAKNNANQTIRNLSNLNNAQKDAEKNLVNSASTLEQVQQNLQTAQQLDNAMGELRQSIAKKDQVKADSKYLNEDPQIKQNYDDAVQRVETIINETQNPELLKANIDQATQSVQNAEQALHGAEKLNQDKQTSSTELDGLTDLTDAQREKLREQINTSNSRDDIKQKIEQAKALNDAMKKLKEQVAQKDGVHANSDYTNEDSAQKDAYNNALKQAEDIINNSSNPNLNAQDITNALNNIKQAQDNLHGAQKLQQDKNTTNQAIGNLNHLNQPQKDALIQAINGATSRDQVAEKLKEAEALDEAMKQLEDQVNQDDQISNSSPFINEDSDKQKTYNDKIQAAKEIINQTSNPTLDKQKIADTLQNIKDAVNNLHGDQKLAQSKQDANNQLNHLDDLTEEQKNHFKPLINNADTRDEVNKQLEIAKQLNGDMSTLHKVINDKDQIQHLSNYINADNDKKQNYDNAIKEAEDLIHNHPDTLDHKALQDLLNKIDQAHNELNGESRFKQALDNALNDIDSLNSLNVPQRQTVKDNINHVTTLESLAQELQKAKELNDAMKAMRDSIMNQEQIRKNSNYTNEDLAQQNAYNHAVDKINNIIGEDNATMDPQIIKQATQDINTAINGLNGDQKLQDAKTDAKQQITNFTGLTEPQKQALENIINQQTSRANVAKQLSHAKFLNGKMEELKVAVAKASLVRQNSNYINEDVSEKEAYEQAIAKGQEIINSENNPTISSTDINRTIQEINDAEQNLHGDNKLRQAQEIAKNEIQNLDGLNSAQITKLIQDIGRTTTKPAVTQKLEEAKAINQAMQQLKQSIADKDATLNSSNYLNEDSEKKLAYDNAVSQAEQLINQLNDPTMDISNIQAITQKVIQAKDSLHGANKLAQNQADSNLIINQSTNLNDKQKQALNDLINHAQTKQQVAEIIAQANKLNNEMGTLKTLVEEQSNVHQQSKYINEDPQVQNIYNDSIQKGREILNGTTDDVLNNNKIADAIQNIHLTKNDLHGDQKLQKAQQDATNELNYLTNLNNSQRQSEHDEINSAPSRTEVSNDLNHAKALNEAMRQLENEVALENSVKKLSDFINEDEAAQNEYSNALQKAKDIINGVPSSTLDKATIEDALLELQNARESLHGEQKLQEAKNQAVAEIDNLQALNPGQVLAEKTLVNQASTKPEVQEALQKAKELNEAMKALKTEINKKEQIKADSRYVNADSGLQANYNSALNYGSQIIATTQPPELNKDVINRATQTIKTAENNLNGQSKLAEAKSDGNQSIEHLQGLTQSQKDKQHDLINQAQTKQQVDDIVNNSKQLDNSMNQLQQIVNNDNTVKQNSDFINEDSSQQDAYNHAIQAAKDLITAHPTIMDKNQIDQAIENIKQALNDLHGSNKLSEDKKEASEQLQNLNSLTNGQKDTILNHIFSAPTRSQVGEKIASAKQLNNTMKALRDSIADNNEILQSSKYFNEDSEQQNAYNQAVNKAKNIINDQPTPVMANDEIQSVLNEVKQTKDNLHGDQKLANDKTDAQATLNALNYLNQAQRGNLETKVQNSNSRPEVQKVVQLANQLNDAMKKLDDALTGNDAIKQTSNYINEDTSQQVNFDEYTDRGKNIVAEQTNPNMSPTNINTIADKITEAKNDLHGVQKLKQAQQQSINTINQMTGLNQAQKEQLNQEIQQTQTRSEVHQVINKAQALNDSMNTLRQSITDEHEVKQTSNYINETVGNQTAYNNAVDRVKQIINQTSNPTMNPLEVERATSNVKISKDALHGERELNDNKNSKTFAVNHLDNLNQAQKEALTHEIEQATIVSQVNNIYNKAKALNNDMKKLKDIVAQQDNVRQSNNYINEDSTPQNMYNDTINHAQSIIDQVANPTMSHDEIENAINNIKHAINALDGEHKLQQAKENANLLINSLNDLNAPQRDAINRLVNEAQTREKVAEQLQSAQALNDAMKHLRNSIQNQSSVRQESKYINASDAKKEQYNHAVREVENIINEQHPTLDKEIIKQLTDGVNQANNDLNGVELLDADKQNAHQSIPTLMHLNQAQQNALNEKINNAVTRTEVAAIIGQAKLLDHAMENLEESIKDKEQVKQSSNYINEDSDVQETYDNAVDHVTEILNQTVNPTLSIEDIEHAINEVNQAKKQLRGKQKLYQTIDLADKELSKLDDLTSQQSSSISNQIYTAKTRTEVAQAIEKAKSLNHAMKALNKVYKNADKVLDSSRFINEDQPEKKAYQQAINHVDSIIHRQTNPEMDPTVINSITHELETAQNNLHGDQKLAHAQQDAANVINGLIHLNVAQREVMINTNTNATTREKVAKNLDNAQALDKAMETLQQVVAHKNNILNDSKYLNEDSKYQQQYDRVIADAEQLLNQTTNPTLEPYKVDIVKDNVLANEKILFGAEKLSYDKSNANDEIKHMNYLNNAQKQSIKDMISHAALRTEVKQLLQQAKILDEAMKSLEDKTQVVITDTTLPNYTEASEDKKEKVDQTVSHAQAIIDKINGSNVSLDQVRQALEQLTQASENLDGDQRVEEAKVHANQTIDQLTHLNSLQQQTAKESVKNATKLEEIATVSNNAQALNKVMGKLEQFINHADSVENSDNYRQADDDKIIAYDEALEHGQDIQKTNATQNETKQALQQLIYAETSLNGFERLNHARPRALEYIKSLEKINNAQKSALEDKVTQSHDLLELEHIVNEGTNLNDIMGELANAIVNNYAPTKASINYINADNLRKDNFTQAINNARDALNKTQGQNLDFNAIDTFKDDIFKTKDALNGIERLTAAKSKAEKLIDSLKFINKAQFTHANDEIMNTNSIAQLSRIVNQAFDLNDAMKSLRDELNNQAFPVQASSNYINSDEDLKQQFDHALSNARKVLAKENGKNLDEKQIQGLKQVIEDTKDALNGIQRLSKAKAKAIQYVQSLSYINDAQRHIAENNIHNSDDLSSLANTLSKASDLDNAMKDLRDTIESNSTSVPNSVNYINADKNLQIEFDEALQQASATSSKTSENPATIEEVLGLSQAIYDTKNALNGEQRLATEKSKDLKLIKGLKDLNKAQLEDVTNKVNSANTLTELSQLTQSTLELNDKMKLLRDKLKTLVNPVKASLNYRNADYNLKRQFNKALKEAKGVLNKNSGTNVNINDIQHLLTQIDNAKDQLNGERRLKEHQQKSEVFIIKELDILNNAQKAAIINQIRASKDIKIINQIVDNAIELNDAMQGLKEHVAQLTATTKDNIEYLNADEDHKLQYDYAINLANNVLDKENGTNKDANIIIGMIQNMDDARALLNGIERLKDAQTKAHNDIKDTLKRQLDEIEHANATSNSKAQAKQMVNEEARKALSNINDATSNDLVNQAKDEGQSAIEHIHADELPKAKLDANQMIDQKVEDINHLISQNPNLSNEEKNKLISQINKLVNGIKNEIQQAINKQQIENATTKLDEVIETTKKLIIAKAEAKQMIKELSQKKRDAINNNTDLTPSQKAHALADIDKTEKDALQHIENSNSIDDINNNKEHAFNTLAHIIIWDTDQQPLVFELPELSLQNALVTSEVVVHRDETISLESIIGAMTLTDELKVNIVSLPNTDKVADHLTAKVKVILADGSYVTVNVPVKVVEKELQIAKKDAIKTIDVLVKQKIKDIDSNNELTSTQREDAKAEIERLKKQAIDKVNHSKSIKDIETVKRTDFEEIDQFDPKRFTLNKAKKDIITDVNTQIQNGFKEIETIKGLTSNEKTQFDKQLTALQKEFLEKVEHAHNLVELNQLQQEFNNRYKHILNQAHLLGEKHIAEHKLGYVVVNKTQQILNNQSASYFIKQWALDRIKQIQLETMNSIRGAHTVQDVHKALLQGIEQILKVNVSIINQSFNDSLHNFNYLHSKFDARLREKDVANHIVQTETFKEVLKGTGVEPGKINKETQQPKLHKNDNDSLFKHLVDNFGKTVGVITLTGLLSSFWLVLAKRRKKEEEEKQSIKNHHKDIRLSDTDKIDPIVITKRKIDKEEQIQNDDKHSIPVAKHKKSKEKQLSEEDIHSIPVVKRKQNSDNKDTKQKKVTSKKKKTPQSTKKVVKTKKRSKK.

FIVAR domains are found at residues 1815-1871 (ARRR…VNSA), 1901-1957 (AKEQ…INDA), 1985-2041 (AYDT…VRDA), 2071-2127 (AKKR…ITSE), 2155-2211 (AYNK…VTQA), 2241-2297 (AKNR…ISSE), 2325-2381 (AYNK…VEDA), 2411-2467 (AKEK…ITEN), 2488-2551 (DTTS…VNNA), 2581-2638 (ARNR…STEI), 2665-2720 (AKNQ…IRTN), 2748-2804 (AKTA…VSDE), 2832-2888 (AYNQ…VNNA), 2918-2974 (AKEQ…ISNA), 3002-3058 (AYNQ…VTAA), 3088-3144 (AKQQ…ITNE), 3172-3228 (AYNQ…VAQA), 3258-3314 (AKNQ…ISDE), 3335-3398 (DTTE…VNNA), 3428-3484 (ARLN…ITTE), 3512-3567 (AKTA…IKTN), 3595-3650 (IKRQ…VKES), 3678-3733 (AKNR…IRQN), 3802-3860 (SMTA…IDQK), 3928-3983 (AMTQ…LDPA), 4056-4114 (AMQA…VNQK), 4182-4240 (SMGT…VDNA), 4308-4365 (AMHT…INQK), 4433-4491 (VMEQ…IEQA), and 4559-4617 (SMQT…IDQT). Residues 2495–2507 (EVRKLSRRGDTNN) show a composition bias toward basic and acidic residues. Residues 2495–2514 (EVRKLSRRGDTNNKKPSSVS) form a disordered region. Residues 2925–2938 (AVDQVPSTEGMTQQ) are compositionally biased toward polar residues. A disordered region spans residues 2925 to 2951 (AVDQVPSTEGMTQQTKDDYNSKQQAAQ). The tract at residues 4649–4674 (GYLNDPQKSGEESLVNGSNTRSEVEE) is disordered. 14 FIVAR domains span residues 4685 to 4743 (AMKQ…IEQK), 4811 to 4869 (AMQA…IEQA), 4937 to 4995 (AMSN…IEQA), 5063 to 5115 (AMEA…VLDK), 5189 to 5246 (AMLG…INQL), 5314 to 5372 (LMGA…VTTA), 5440 to 5498 (AMGE…IDQA), 5566 to 5624 (AMKK…ITNA), 5692 to 5750 (AMKQ…IADT), 5818 to 5875 (DMST…LQDL), 5943 to 6000 (AMKA…IKQA), 6068 to 6126 (KMEE…INRT), 6194 to 6252 (AMQQ…IQAI), and 6320 to 6378 (EMGT…IADA). Positions 5699–5712 (QVNQDDQISNSSPF) are enriched in polar residues. The segment at 5699–5719 (QVNQDDQISNSSPFINEDSDK) is disordered. Residues 6413-6434 (NNSQRQSEHDEINSAPSRTEVS) are disordered. 18 consecutive FIVAR domains span residues 6446–6504 (AMRQ…IEDA), 6572–6630 (AMKA…INRA), 6698–6755 (SMNQ…IDQA), 6823–6877 (TMKA…ANDE), 6949–7007 (AMKK…INTI), 7075–7133 (SMNT…VERA), 7201–7259 (DMKK…IENA), 7327–7384 (AMKH…IKQL), 7452–7510 (AMEN…IEHA), 7578–7636 (AMKA…INSI), 7704–7762 (AMET…VDIV), 7830–7888 (AMKS…VRQA), 7956–8010 (VMGK…TKQA), 8078–8137 (IMGE…IDTF), 8205–8264 (AMKS…IQGL), 8332–8391 (AMKD…VLGL), 8459–8518 (KMKL…IQHL), and 8587–8643 (AMQG…ANII). The helical transmembrane segment at 9306-9324 (TVGVITLTGLLSSFWLVLA) threads the bilayer. Basic and acidic residues-rich tracts occupy residues 9363-9375 (DKEEQIQNDDKHS), 9386-9395 (EKQLSEEDIH), and 9404-9413 (QNSDNKDTKQ). Residues 9363 to 9439 (DKEEQIQNDD…VVKTKKRSKK (77 aa)) are disordered. The span at 9414–9439 (KKVTSKKKKTPQSTKKVVKTKKRSKK) shows a compositional bias: basic residues.

It localises to the cell membrane. The polypeptide is Extracellular matrix-binding protein ebh (ebh) (Staphylococcus epidermidis (strain ATCC 12228 / FDA PCI 1200)).